Consider the following 303-residue polypeptide: ATP synthase gamma chain (303 aa).

This sequence belongs to the ATPase gamma chain family. F-type ATPases have 2 components, CF(1) - the catalytic core - and CF(0) - the membrane proton channel. CF(1) has five subunits: alpha(3), beta(3), gamma(1), delta(1), epsilon(1). CF(0) has three main subunits: a, b and c.

It localises to the cell inner membrane. Its function is as follows. Produces ATP from ADP in the presence of a proton gradient across the membrane. The gamma chain is believed to be important in regulating ATPase activity and the flow of protons through the CF(0) complex. The chain is ATP synthase gamma chain from Bartonella henselae (strain ATCC 49882 / DSM 28221 / CCUG 30454 / Houston 1) (Rochalimaea henselae).